The chain runs to 272 residues: NH(3)-dependent NAD(+) synthetase (272 aa).

45–52 serves as a coordination point for ATP; that stretch reads GISGGQDS. A Mg(2+)-binding site is contributed by D51. Residue R138 coordinates deamido-NAD(+). T158 contributes to the ATP binding site. E163 provides a ligand contact to Mg(2+). Deamido-NAD(+) contacts are provided by K171 and D178. 2 residues coordinate ATP: K187 and T209. 258–259 is a binding site for deamido-NAD(+); sequence HK.

This sequence belongs to the NAD synthetase family. As to quaternary structure, homodimer.

The catalysed reaction is deamido-NAD(+) + NH4(+) + ATP = AMP + diphosphate + NAD(+) + H(+). Its pathway is cofactor biosynthesis; NAD(+) biosynthesis; NAD(+) from deamido-NAD(+) (ammonia route): step 1/1. Functionally, catalyzes the ATP-dependent amidation of deamido-NAD to form NAD. Uses ammonia as a nitrogen source. The polypeptide is NH(3)-dependent NAD(+) synthetase (Bacillus cereus (strain AH187)).